Consider the following 672-residue polypeptide: tRNA 5-methylaminomethyl-2-thiouridine biosynthesis bifunctional protein MnmC (672 aa).

The interval 1–241 is tRNA (mnm(5)s(2)U34)-methyltransferase; sequence MLKVTTAHIH…KRECLQGFKP (241 aa). Residues 271-672 are FAD-dependent cmnm(5)s(2)U34 oxidoreductase; it reads IGGGISSLFS…RKLLKGTPVK (402 aa).

It in the N-terminal section; belongs to the methyltransferase superfamily. tRNA (mnm(5)s(2)U34)-methyltransferase family. The protein in the C-terminal section; belongs to the DAO family. FAD serves as cofactor.

The protein localises to the cytoplasm. The enzyme catalyses 5-aminomethyl-2-thiouridine(34) in tRNA + S-adenosyl-L-methionine = 5-methylaminomethyl-2-thiouridine(34) in tRNA + S-adenosyl-L-homocysteine + H(+). Functionally, catalyzes the last two steps in the biosynthesis of 5-methylaminomethyl-2-thiouridine (mnm(5)s(2)U) at the wobble position (U34) in tRNA. Catalyzes the FAD-dependent demodification of cmnm(5)s(2)U34 to nm(5)s(2)U34, followed by the transfer of a methyl group from S-adenosyl-L-methionine to nm(5)s(2)U34, to form mnm(5)s(2)U34. In Mannheimia succiniciproducens (strain KCTC 0769BP / MBEL55E), this protein is tRNA 5-methylaminomethyl-2-thiouridine biosynthesis bifunctional protein MnmC.